The chain runs to 318 residues: NADH-ubiquinone oxidoreductase chain 1 (318 aa).

The next 9 helical transmembrane spans lie at 2–22 (FLMN…FLTL), 37–57 (PNIV…KLFI), 69–89 (LMFT…WIPM), 100–120 (LGVL…LWSG), 136–156 (VAQT…TMMM), 171–191 (HMWL…STLA), 206–226 (ELVS…FFMA), 253–273 (ELFT…FLWI), and 294–314 (LPLT…SAGI).

Belongs to the complex I subunit 1 family.

It localises to the mitochondrion inner membrane. The enzyme catalyses a ubiquinone + NADH + 5 H(+)(in) = a ubiquinol + NAD(+) + 4 H(+)(out). Core subunit of the mitochondrial membrane respiratory chain NADH dehydrogenase (Complex I) that is believed to belong to the minimal assembly required for catalysis. Complex I functions in the transfer of electrons from NADH to the respiratory chain. The immediate electron acceptor for the enzyme is believed to be ubiquinone. This is NADH-ubiquinone oxidoreductase chain 1 (MT-ND1) from Tolypeutes matacus (Southern three-banded armadillo).